Consider the following 331-residue polypeptide: Probable endo-beta-1,4-glucanase B (331 aa).

Positions Met1–Ala18 are cleaved as a signal peptide. N-linked (GlcNAc...) asparagine glycosylation is found at Asn38 and Asn100. Glu160 serves as the catalytic Proton donor. Asn211 carries N-linked (GlcNAc...) asparagine glycosylation. Glu266 serves as the catalytic Nucleophile. The N-linked (GlcNAc...) asparagine glycan is linked to Asn288.

Belongs to the glycosyl hydrolase 5 (cellulase A) family.

The protein localises to the secreted. The enzyme catalyses Endohydrolysis of (1-&gt;4)-beta-D-glucosidic linkages in cellulose, lichenin and cereal beta-D-glucans.. Has endoglucanase activity on substrates containing beta-1,4 glycosidic bonds, like in carboxymethylcellulose (CMC), hydroxyethylcellulose (HEC) and beta-glucan. Involved in the degradation of complex natural cellulosic substrates. This is Probable endo-beta-1,4-glucanase B (eglB) from Aspergillus niger (strain ATCC MYA-4892 / CBS 513.88 / FGSC A1513).